The sequence spans 337 residues: Anthranilate phosphoribosyltransferase (337 aa).

5-phospho-alpha-D-ribose 1-diphosphate is bound by residues G81, 84–85 (GD), S89, 91–94 (NVST), 109–117 (KHGNRALSS), and A121. G81 contributes to the anthranilate binding site. S93 contributes to the Mg(2+) binding site. Residue N112 coordinates anthranilate. R167 serves as a coordination point for anthranilate. 2 residues coordinate Mg(2+): D226 and E227.

Belongs to the anthranilate phosphoribosyltransferase family. Homodimer. It depends on Mg(2+) as a cofactor.

The enzyme catalyses N-(5-phospho-beta-D-ribosyl)anthranilate + diphosphate = 5-phospho-alpha-D-ribose 1-diphosphate + anthranilate. It functions in the pathway amino-acid biosynthesis; L-tryptophan biosynthesis; L-tryptophan from chorismate: step 2/5. Catalyzes the transfer of the phosphoribosyl group of 5-phosphorylribose-1-pyrophosphate (PRPP) to anthranilate to yield N-(5'-phosphoribosyl)-anthranilate (PRA). The protein is Anthranilate phosphoribosyltransferase of Nitrobacter hamburgensis (strain DSM 10229 / NCIMB 13809 / X14).